Here is a 522-residue protein sequence, read N- to C-terminus: DNA damage-binding protein cmr1 (522 aa).

The span at 34 to 47 (VFTPTLPNRATGSQ) shows a compositional bias: polar residues. Disordered stretches follow at residues 34 to 89 (VFTP…KRKA) and 217 to 239 (QEKP…DPVL). Residues 49 to 59 (KTKKKPAPKKV) are compositionally biased toward basic residues. A WD 1 repeat occupies 182 to 223 (LTPERVYTMTFHPSETKPLIFAGDKMGHLGILDASQEKPTSV). Positions 226-236 (EDEDEEDDDPD) are enriched in acidic residues. 6 WD repeats span residues 244–284 (PHTR…SVER), 294–331 (VPLS…QGSV), 336–376 (LSEK…RREP), 381–422 (EHQS…ASWK), 445–488 (GRWV…LAQL), and 491–522 (DGIT…CLWM).

It belongs to the WD repeat DDB2/WDR76 family.

Its function is as follows. DNA-binding protein that binds to both single- and double-stranded DNA. Binds preferentially to UV-damaged DNA. May be involved in DNA-metabolic processes. The chain is DNA damage-binding protein cmr1 from Aspergillus oryzae (strain ATCC 42149 / RIB 40) (Yellow koji mold).